The following is a 337-amino-acid chain: Glyceraldehyde-3-phosphate dehydrogenase (337 aa).

NAD(+)-binding positions include 13–14 (RI), aspartate 35, and arginine 80. D-glyceraldehyde 3-phosphate-binding positions include 151–153 (SCT), threonine 182, 211–212 (TG), and arginine 234. Catalysis depends on cysteine 152, which acts as the Nucleophile. An NAD(+)-binding site is contributed by asparagine 316.

The protein belongs to the glyceraldehyde-3-phosphate dehydrogenase family. In terms of assembly, homotetramer.

The protein resides in the cytoplasm. It catalyses the reaction D-glyceraldehyde 3-phosphate + phosphate + NAD(+) = (2R)-3-phospho-glyceroyl phosphate + NADH + H(+). Its pathway is carbohydrate degradation; glycolysis; pyruvate from D-glyceraldehyde 3-phosphate: step 1/5. The chain is Glyceraldehyde-3-phosphate dehydrogenase (GPD1) from Monascus purpureus (Red mold).